The sequence spans 455 residues: Serine--tRNA ligase (455 aa).

Thr-252–Glu-254 contacts L-serine. ATP-binding positions include Arg-283 to Glu-285 and Val-299. L-serine is bound at residue Glu-306. Glu-370–Ser-373 contributes to the ATP binding site. Thr-406 contacts L-serine.

It belongs to the class-II aminoacyl-tRNA synthetase family. Type-1 seryl-tRNA synthetase subfamily. In terms of assembly, homodimer. The tRNA molecule binds across the dimer.

The protein localises to the cytoplasm. The enzyme catalyses tRNA(Ser) + L-serine + ATP = L-seryl-tRNA(Ser) + AMP + diphosphate + H(+). It catalyses the reaction tRNA(Sec) + L-serine + ATP = L-seryl-tRNA(Sec) + AMP + diphosphate + H(+). It participates in aminoacyl-tRNA biosynthesis; selenocysteinyl-tRNA(Sec) biosynthesis; L-seryl-tRNA(Sec) from L-serine and tRNA(Sec): step 1/1. Its function is as follows. Catalyzes the attachment of serine to tRNA(Ser). Is also able to aminoacylate tRNA(Sec) with serine, to form the misacylated tRNA L-seryl-tRNA(Sec), which will be further converted into selenocysteinyl-tRNA(Sec). This chain is Serine--tRNA ligase, found in Thermococcus kodakarensis (strain ATCC BAA-918 / JCM 12380 / KOD1) (Pyrococcus kodakaraensis (strain KOD1)).